We begin with the raw amino-acid sequence, 1871 residues long: Callose synthase 4 (1871 aa).

At 1–491 (MNQPNRGQIL…FWHLFRSFDR (491 aa)) the chain is on the cytoplasmic side. A helical transmembrane segment spans residues 492-512 (MWSFYILSLQAMIIIAWNETS). Residues 513–521 (ESGGAVFHK) lie on the Extracellular side of the membrane. Residues 522–542 (VLSVFITAAKLNLFQAFLDIA) form a helical membrane-spanning segment. The Cytoplasmic segment spans residues 543–558 (LSWKARHSMSTHVRQR). The chain crosses the membrane as a helical span at residues 559 to 579 (YIFKAVAAAVWVLLMPLTYAY). Residues 580 to 583 (SHTS) lie on the Extracellular side of the membrane. The helical transmembrane segment at 584–604 (IFIVAILIYLSPNMLPEMLLL) threads the bilayer. The Cytoplasmic portion of the chain corresponds to 605–640 (IPSIRRTLEKSDFRPVKLIMWWSQPELYIGRGMHES). Residues 641–661 (AWSIYKYMMFWIVLLTSKLAF) form a helical membrane-spanning segment. The Extracellular segment spans residues 662–701 (SYYVEQIKPLMGPTKEIMSVPMPGYWLPEFFPHVKNNRGV). The chain crosses the membrane as a helical span at residues 702 to 724 (VITLWSPVILVYFMDTQIWYAIV). At 725–1441 (STLVGGLYGA…FDFFRMLSCY (717 aa)) the chain is on the cytoplasmic side. Residues 1442 to 1462 (FTTVGFYFCSMLTVLTVYVFL) traverse the membrane as a helical segment. Residues 1463 to 1485 (YGRLYLVLSGVEKELGNKPMMME) are Extracellular-facing. A helical membrane pass occupies residues 1486-1506 (IILASQSFVQIVFLMAMPMIM). The Cytoplasmic segment spans residues 1507 to 1516 (EIGLERGFYD). Residues 1517 to 1537 (ALFDFVLMQLQLASVFFTFQL) form a helical membrane-spanning segment. The Extracellular segment spans residues 1538 to 1580 (GTKFHYYCKTLLHGGAEYRGTGRGFVVFHAKFAENYRFYSRSH). 2 helical membrane-spanning segments follow: residues 1581 to 1601 (FVKATELGILLLVYHIFGPTY) and 1602 to 1622 (IGLFTISIWFMVGTWLFAPFL). Residues 1623–1675 (FNPSGFEWHEIVEDWADWKKWIEYDNGGIGVPPEKSWESWWEKDIEHLQHSGK) lie on the Extracellular side of the membrane. A helical transmembrane segment spans residues 1676–1696 (WGIVVEIFFALRFFIFQYGLV). The Cytoplasmic portion of the chain corresponds to 1697–1708 (YQLSAFKNKYSS). The helical transmembrane segment at 1709 to 1729 (LWVFGASWLLILILLLTVTVL) threads the bilayer. The Extracellular segment spans residues 1730–1741 (DYARRRLGTEFQ). The helical transmembrane segment at 1742–1762 (LLFRIIKVSLFLAFMAIFITL) threads the bilayer. The Cytoplasmic portion of the chain corresponds to 1763 to 1772 (MTCRLILPQD). Residues 1773–1793 (VFLCMLALIPTGWGLLLIAQS) form a helical membrane-spanning segment. The Extracellular portion of the chain corresponds to 1794–1815 (CKPLIQQPGIWSWVMTLAWVYD). The helical transmembrane segment at 1816–1836 (LVMGSLLFIPIAFMAWFPFIS) threads the bilayer. Topologically, residues 1837–1871 (EFQTRMLFNQAFSRGLHISRILSGQRKHRSSKNKD) are cytoplasmic.

It belongs to the glycosyltransferase 48 family.

It localises to the cell membrane. It catalyses the reaction [(1-&gt;3)-beta-D-glucosyl](n) + UDP-alpha-D-glucose = [(1-&gt;3)-beta-D-glucosyl](n+1) + UDP + H(+). Its function is as follows. Involved in callose synthesis at the forming cell plate during cytokinesis. During plant growth and development, callose is found as a transitory component of the cell plate in dividing cells, is a major component of pollen mother cell walls and pollen tubes, and is found as a structural component of plasmodesmatal canals. The chain is Callose synthase 4 (CALS4) from Arabidopsis thaliana (Mouse-ear cress).